The sequence spans 223 residues: Ribosome maturation factor RimM (223 aa).

Positions 1 to 12 (MARRPGSSSRGP) are enriched in low complexity. Disordered stretches follow at residues 1–44 (MARR…DPGL) and 204–223 (ADPP…DDPG). The region spanning 136–210 (EDEFFLTDLI…KVVADPPDDL (75 aa)) is the PRC barrel domain.

This sequence belongs to the RimM family. As to quaternary structure, binds ribosomal protein uS19.

The protein localises to the cytoplasm. In terms of biological role, an accessory protein needed during the final step in the assembly of 30S ribosomal subunit, possibly for assembly of the head region. Essential for efficient processing of 16S rRNA. May be needed both before and after RbfA during the maturation of 16S rRNA. It has affinity for free ribosomal 30S subunits but not for 70S ribosomes. The sequence is that of Ribosome maturation factor RimM from Methylorubrum extorquens (strain PA1) (Methylobacterium extorquens).